The sequence spans 225 residues: Ribosomal RNA large subunit methyltransferase E (225 aa).

S-adenosyl-L-methionine is bound by residues Gly79, Trp81, Asp97, Asp113, and Asp137. Lys177 serves as the catalytic Proton acceptor.

Belongs to the class I-like SAM-binding methyltransferase superfamily. RNA methyltransferase RlmE family.

The protein resides in the cytoplasm. It carries out the reaction uridine(2552) in 23S rRNA + S-adenosyl-L-methionine = 2'-O-methyluridine(2552) in 23S rRNA + S-adenosyl-L-homocysteine + H(+). Functionally, specifically methylates the uridine in position 2552 of 23S rRNA at the 2'-O position of the ribose in the fully assembled 50S ribosomal subunit. The sequence is that of Ribosomal RNA large subunit methyltransferase E from Acidiphilium cryptum (strain JF-5).